Reading from the N-terminus, the 101-residue chain is Glutaredoxin-1 (101 aa).

Residues 3–101 enclose the Glutaredoxin domain; that stretch reads DSFVQSKLRD…MMLRQIGALV (99 aa). C23 and C26 are joined by a disulfide.

It belongs to the glutaredoxin family.

Its subcellular location is the cytoplasm. In terms of biological role, has a glutathione-disulfide oxidoreductase activity in the presence of NADPH and glutathione reductase. Reduces low molecular weight disulfides and proteins. This chain is Glutaredoxin-1 (GLRX), found in Gallus gallus (Chicken).